We begin with the raw amino-acid sequence, 323 residues long: Peroxisomal and mitochondrial division factor 2 (323 aa).

Disordered stretches follow at residues 1 to 55 (MAEE…NDAI), 73 to 92 (ESKA…KSDE), and 120 to 143 (TART…SQKG). Over 1–297 (MAEERSLNGE…WSPNVTAVGS (297 aa)) the chain is Cytoplasmic. Residues 13 to 26 (GQDDESFFDSDQQG) show a composition bias toward acidic residues. Positions 28-278 (DGKSTELNQK…INGLKNVVEE (251 aa)) form a coiled coil. The chain crosses the membrane as a helical span at residues 298–318 (GGAVAAVAVAVAGAAVVCYIY). At 319–323 (HSRRV) the chain is on the mitochondrial intermembrane side.

As to quaternary structure, homodimer. Interacts with PMD1.

The protein resides in the mitochondrion outer membrane. In terms of biological role, involved in morphogenesis and proliferation of mitochondria. Does not act redundantly with PMD1. Is not involved in peroxisomal proliferation. This Arabidopsis thaliana (Mouse-ear cress) protein is Peroxisomal and mitochondrial division factor 2.